Here is a 617-residue protein sequence, read N- to C-terminus: Proline--tRNA ligase (617 aa).

It belongs to the class-II aminoacyl-tRNA synthetase family. ProS type 1 subfamily. Homodimer.

Its subcellular location is the cytoplasm. The catalysed reaction is tRNA(Pro) + L-proline + ATP = L-prolyl-tRNA(Pro) + AMP + diphosphate. Its function is as follows. Catalyzes the attachment of proline to tRNA(Pro) in a two-step reaction: proline is first activated by ATP to form Pro-AMP and then transferred to the acceptor end of tRNA(Pro). As ProRS can inadvertently accommodate and process non-cognate amino acids such as alanine and cysteine, to avoid such errors it has two additional distinct editing activities against alanine. One activity is designated as 'pretransfer' editing and involves the tRNA(Pro)-independent hydrolysis of activated Ala-AMP. The other activity is designated 'posttransfer' editing and involves deacylation of mischarged Ala-tRNA(Pro). The misacylated Cys-tRNA(Pro) is not edited by ProRS. This Streptococcus agalactiae serotype III (strain NEM316) protein is Proline--tRNA ligase.